The following is a 1199-amino-acid chain: DNA-directed RNA polymerase subunit beta (1199 aa).

Positions 1175–1199 (EEKKAHEAAAQATDGKSANSTDDKK) are disordered. Residues 1188-1199 (DGKSANSTDDKK) show a composition bias toward polar residues.

This sequence belongs to the RNA polymerase beta chain family. As to quaternary structure, the RNAP catalytic core consists of 2 alpha, 1 beta, 1 beta' and 1 omega subunit. When a sigma factor is associated with the core the holoenzyme is formed, which can initiate transcription.

It carries out the reaction RNA(n) + a ribonucleoside 5'-triphosphate = RNA(n+1) + diphosphate. In terms of biological role, DNA-dependent RNA polymerase catalyzes the transcription of DNA into RNA using the four ribonucleoside triphosphates as substrates. This Lacticaseibacillus paracasei (strain ATCC 334 / BCRC 17002 / CCUG 31169 / CIP 107868 / KCTC 3260 / NRRL B-441) (Lactobacillus paracasei) protein is DNA-directed RNA polymerase subunit beta.